We begin with the raw amino-acid sequence, 634 residues long: Probable potassium transport system protein Kup 1 (634 aa).

The next 12 helical transmembrane spans lie at 20–40 (FLTL…TSPL), 64–84 (VMSL…VLLI), 110–130 (FAAI…DAII), 148–168 (PVFD…LFVV), 176–196 (VAAW…LGGI), 224–244 (AGLL…ALYA), 256–276 (FAWF…QGAM), 290–310 (FLFP…ATII), 348–368 (IYIP…VFAF), 377–397 (AYGI…YFVM), 405–425 (VATS…FLMA), and 430–450 (IFEG…VMIT).

The protein belongs to the HAK/KUP transporter (TC 2.A.72) family.

It localises to the cell inner membrane. The catalysed reaction is K(+)(in) + H(+)(in) = K(+)(out) + H(+)(out). Transport of potassium into the cell. Likely operates as a K(+):H(+) symporter. This Rhodopseudomonas palustris (strain BisB5) protein is Probable potassium transport system protein Kup 1.